We begin with the raw amino-acid sequence, 1367 residues long: Protein patched homolog 3 (1367 aa).

Topologically, residues 1-97 (MSFPDEETDL…WLFRIGCFVQ (97 aa)) are cytoplasmic. A helical transmembrane segment spans residues 98 to 118 (RWAWSTIFISLFLYCLCLGGL). Residues 119-625 (RHVTIETDLV…IADMLEEFSQ (507 aa)) lie on the Extracellular side of the membrane. N-linked (GlcNAc...) asparagine glycans are attached at residues Asn235, Asn310, Asn454, and Asn591. A helical membrane pass occupies residues 626–646 (FNYIIIVIGYILMVIYAAFTQ). An SSD domain is found at 627 to 788 (NYIIIVIGYI…MFIFPAMIGI (162 aa)). Topologically, residues 647 to 659 (GRFQGWWLAVQSN) are cytoplasmic. The chain crosses the membrane as a helical span at residues 660-680 (VALAICGVILVTISSICGLGF). The Extracellular portion of the chain corresponds to 681–694 (ATHLGINFNAATTQ). The helical transmembrane segment at 695–715 (VVPFLSLGLGIDDMFLLLHNY) threads the bilayer. Over 716 to 737 (DEIINICNKNEIGVLLKETGMS) the chain is Cytoplasmic. Residues 738–758 (VMLTSINNILAFISGYVLPIP) form a helical membrane-spanning segment. Over 759–767 (ALRSFCSQT) the chain is Extracellular. The chain crosses the membrane as a helical span at residues 768–788 (AILLAFNLIFLMFIFPAMIGI). Residues 789-863 (DLRRQRKGKR…KIYIPALKNN (75 aa)) are Cytoplasmic-facing. The helical transmembrane segment at 864–884 (VVKACVLIGTTTAVVFGLYGM) threads the bilayer. The Extracellular portion of the chain corresponds to 885-1143 (YTSTLGLELA…WEQYLTLRWN (259 aa)). The helical transmembrane segment at 1144 to 1164 (LFQAICIIALAVFCVISILMF) threads the bilayer. The Cytoplasmic portion of the chain corresponds to 1165 to 1171 (NPWAATL). The chain crosses the membrane as a helical span at residues 1172 to 1192 (IMCIVVITTIELGGFMGLMGI). Over 1193–1199 (KMNPISA) the chain is Extracellular. A helical membrane pass occupies residues 1200-1220 (VTLICAVGIGVEFTAHVELAF). Residues 1221–1237 (LTALGTIDQRLESCLQH) lie on the Cytoplasmic side of the membrane. Residues 1238-1258 (MFVPVYHGAISTFLGVVMLVF) traverse the membrane as a helical segment. Residues 1259 to 1273 (SEFDFVVTYFFYTMT) lie on the Extracellular side of the membrane. A helical transmembrane segment spans residues 1274–1294 (LLVALGVFNGLCVLPVILTLV). Over 1295–1367 (GPKPELTPTD…SDDESSPAHK (73 aa)) the chain is Cytoplasmic. Positions 1302 to 1367 (PTDGSSVLPP…SDDESSPAHK (66 aa)) are disordered. The segment covering 1346 to 1356 (RDSPSTSSASH) has biased composition (low complexity).

This sequence belongs to the patched family. As to expression, in males, expressed in the precursor and mature sensory rays, the cloaca, and pre-anal ganglia and cephalic neurons. Also expressed in five cells in the valve region between the seminal vesicle and vas deferens of the somatic gonad.

The protein localises to the apical cell membrane. It localises to the cell junction. It is found in the adherens junction. Regulates osmosis during embryonic development. Required for larval development and in particular is involved in larval molting. The sequence is that of Protein patched homolog 3 from Caenorhabditis elegans.